The primary structure comprises 2219 residues: RNA-directed RNA polymerase L (2219 aa).

Residues 26-289 (KLAFLVQTEP…TTEDDVEYLI (264 aa)) form an endonuclease region. Mn(2+) contacts are provided by glutamate 51, aspartate 89, and glutamate 102. The active site involves lysine 115. The 197-residue stretch at 1177–1373 (LSMKLNVSLA…YMSDQLNKFV (197 aa)) folds into the RdRp catalytic domain. Aspartate 1335 lines the Mg(2+) pocket.

The protein belongs to the Bunyavirales RNA polymerase family. As to quaternary structure, homomultimer; the oligomeric structure is essential for the polymerase activity. Interacts with nucleoprotein N. Interacts with protein Z; this interaction inhibits viral transcription and replication, Z partially blocks the product exit tunnel for the releasing nascent RNA product. Mn(2+) is required as a cofactor. Mg(2+) serves as cofactor.

The protein localises to the virion. It localises to the host cytoplasm. It carries out the reaction RNA(n) + a ribonucleoside 5'-triphosphate = RNA(n+1) + diphosphate. Its function is as follows. RNA-dependent RNA polymerase, which is responsible for the replication and transcription of the viral RNA genome using antigenomic RNA as an intermediate. During transcription, synthesizes subgenomic RNAs and assures their capping by a cap-snatching mechanism, which involves the endonuclease activity cleaving the host capped pre-mRNAs. These short capped RNAs are then used as primers for viral transcription. The 3'-end of subgenomic mRNAs molecules are heterogeneous and not polyadenylated. The replicase function is to direct synthesis of antigenomic and genomic RNA which are encapsidated and non capped. As a consequence of the use of the same enzyme for both transcription and replication, these mechanisms need to be well coordinated. These processes may be regulated by proteins N and Z in a dose-dependent manner. Z protein inhibits the viral polymerase L und thus the viral transcription and RNA synthesis. This is RNA-directed RNA polymerase L from Homo sapiens (Human).